Reading from the N-terminus, the 1099-residue chain is Solute carrier family 38 member 10 (1099 aa).

10 helical membrane-spanning segments follow: residues 9–31, 36–58, 84–104, 123–143, 153–173, 229–249, 272–292, 323–343, 345–365, and 378–398; these read WGLVTNVVNSIVGVSVLTMPFCF, IVLGALLLVFCSWMTHQSCMFLV, LVETSMIGLMLGSCITFYVVI, TFRVFLLFAVSLCIVLPLSLQ, FSAMALLFYTVFMFVIVLSSF, IFASSLNVVTAFYVMVGFFGY, MIRVGFVMSVAVGFPMMILPC, VLTLSVVFGTMVGGVMIPNVE, ILGFTGATMGSLICFICPALI, and VVLWVGLGILVVSTLTTLSVS. Disordered regions lie at residues 440-679 and 720-1047; these read DSQE…EEAG and EIRQ…LAPK. Residue S441 is modified to Phosphoserine. Basic and acidic residues-rich tracts occupy residues 441-454, 493-508, 517-528, 544-561, and 586-599; these read SQEKLKPAEDKEVL, EAHRHEPPIPHDKVVV, PEEKKPPPKLPD, ESEKKQDPERGEEGKRPE, and PRKEDSRPGNRDLH. Residues S607 and S635 each carry the phosphoserine modification. Basic and acidic residues-rich tracts occupy residues 653-663, 720-735, and 749-766; these read EAAEQREKNEA, EIRQQRQEGEEDKPKP, and GQEEEAEHAGAPDEHAGE. Positions 698-734 form a coiled coil; that stretch reads VQQKRLLDQQEKLLAVIEEQHKEIRQQRQEGEEDKPK. T767 is subject to Phosphothreonine. Composition is skewed to basic and acidic residues over residues 793–802, 852–894, 917–928, 957–969, and 1010–1022; these read KGQHPLEEVK, EPVH…ETGK, EDSHSKSRHSEP, KSQDSHPEVRSEG, and QKPENAKPNRDLK. The residue at position 886 (S886) is a Phosphoserine.

The protein belongs to the amino acid/polyamine transporter 2 family. As to expression, only expressed in the pituitary, adrenal gland, stomach and in the upper gastrointestinal tract.

It localises to the membrane. It carries out the reaction L-glutamate(out) = L-glutamate(in). The enzyme catalyses L-glutamine(out) = L-glutamine(in). The catalysed reaction is L-alanine(in) = L-alanine(out). It catalyses the reaction L-serine(in) = L-serine(out). It carries out the reaction L-leucine(in) = L-leucine(out). Its function is as follows. Facilitates bidirectional transport of amino acids. May act as a glutamate sensor that regulates glutamate-glutamine cycle and mTOR signaling in the brain. The transport mechanism remains to be elucidated. This Rattus norvegicus (Rat) protein is Solute carrier family 38 member 10.